A 503-amino-acid polypeptide reads, in one-letter code: von Willebrand factor A domain-containing protein 1 (503 aa).

A signal peptide spans 1 to 21 (MEVRKALTCVFLTVFLCSGDA). The 178-residue stretch at 36–213 (DVLFLLDSSG…IIGEDLRNSI (178 aa)) folds into the VWFA domain. Fibronectin type-III domains follow at residues 218–324 (RAER…TVNP) and 331–423 (LLSS…VLPA).

As to quaternary structure, homodimer or homomultimer; disulfide-linked.

It localises to the secreted. Its subcellular location is the extracellular space. The protein resides in the extracellular matrix. The protein localises to the basement membrane. Functionally, promotes matrix assembly. Involved in the organization of skeletal muscles and in the formation of neuromuscular junctions. The chain is von Willebrand factor A domain-containing protein 1 from Danio rerio (Zebrafish).